Reading from the N-terminus, the 311-residue chain is Methionyl-tRNA formyltransferase (311 aa).

109 to 112 (SLLP) serves as a coordination point for (6S)-5,6,7,8-tetrahydrofolate.

It belongs to the Fmt family.

The catalysed reaction is L-methionyl-tRNA(fMet) + (6R)-10-formyltetrahydrofolate = N-formyl-L-methionyl-tRNA(fMet) + (6S)-5,6,7,8-tetrahydrofolate + H(+). Its function is as follows. Attaches a formyl group to the free amino group of methionyl-tRNA(fMet). The formyl group appears to play a dual role in the initiator identity of N-formylmethionyl-tRNA by promoting its recognition by IF2 and preventing the misappropriation of this tRNA by the elongation apparatus. The protein is Methionyl-tRNA formyltransferase of Marinobacter nauticus (strain ATCC 700491 / DSM 11845 / VT8) (Marinobacter aquaeolei).